The sequence spans 456 residues: Adenylosuccinate lyase (456 aa).

N(6)-(1,2-dicarboxyethyl)-AMP contacts are provided by residues 15 to 16 (RY), 90 to 92 (NHD), and 122 to 123 (TS). Catalysis depends on H171, which acts as the Proton donor/acceptor. Q247 provides a ligand contact to N(6)-(1,2-dicarboxyethyl)-AMP. Residue S295 is the Proton donor/acceptor of the active site. Residues S296, 301-303 (KVN), N309, R335, and 340-344 (STVLR) each bind N(6)-(1,2-dicarboxyethyl)-AMP.

This sequence belongs to the lyase 1 family. Adenylosuccinate lyase subfamily. As to quaternary structure, homotetramer. Residues from neighboring subunits contribute catalytic and substrate-binding residues to each active site.

The catalysed reaction is N(6)-(1,2-dicarboxyethyl)-AMP = fumarate + AMP. It catalyses the reaction (2S)-2-[5-amino-1-(5-phospho-beta-D-ribosyl)imidazole-4-carboxamido]succinate = 5-amino-1-(5-phospho-beta-D-ribosyl)imidazole-4-carboxamide + fumarate. It functions in the pathway purine metabolism; AMP biosynthesis via de novo pathway; AMP from IMP: step 2/2. It participates in purine metabolism; IMP biosynthesis via de novo pathway; 5-amino-1-(5-phospho-D-ribosyl)imidazole-4-carboxamide from 5-amino-1-(5-phospho-D-ribosyl)imidazole-4-carboxylate: step 2/2. Its function is as follows. Catalyzes two reactions in de novo purine nucleotide biosynthesis. Catalyzes the breakdown of 5-aminoimidazole- (N-succinylocarboxamide) ribotide (SAICAR or 2-[5-amino-1-(5-phospho-beta-D-ribosyl)imidazole-4-carboxamido]succinate) to 5-aminoimidazole-4-carboxamide ribotide (AICAR or 5-amino-1-(5-phospho-beta-D-ribosyl)imidazole-4-carboxamide) and fumarate, and of adenylosuccinate (ADS or N(6)-(1,2-dicarboxyethyl)-AMP) to adenosine monophosphate (AMP) and fumarate. This Legionella pneumophila subsp. pneumophila (strain Philadelphia 1 / ATCC 33152 / DSM 7513) protein is Adenylosuccinate lyase (purB).